A 384-amino-acid polypeptide reads, in one-letter code: Zinc finger CCCH domain-containing protein 12 (384 aa).

Disordered stretches follow at residues 1-32 (MSHH…NLGD) and 46-81 (WAMN…SAAS). The span at 50 to 60 (PDNTSGDNNGP) shows a compositional bias: polar residues. Residues 70-81 (SSSSATTTSAAS) are compositionally biased toward low complexity. C3H1-type zinc fingers lie at residues 91–118 (FFKT…HTVE) and 172–200 (SFKG…HDEA). Positions 211–231 (LGPGGYGSGGGGGSGGGSVGG) are disordered. Residues 212-231 (GPGGYGSGGGGGSGGGSVGG) are compositionally biased toward gly residues. Residues 260–288 (NWKTRICNKWEITGYCPFGAKCHFAHGAA) form a C3H1-type 3 zinc finger. The disordered stretch occupies residues 299–335 (EEEGKDGVSPNPDTKQTVQNPKGLSDTTTLLSPGVPH). Over residues 309–329 (NPDTKQTVQNPKGLSDTTTLL) the composition is skewed to polar residues.

This Arabidopsis thaliana (Mouse-ear cress) protein is Zinc finger CCCH domain-containing protein 12.